The chain runs to 190 residues: Recombination protein RecR (190 aa).

The C4-type zinc finger occupies 58 to 73 (CEQCGALSENELCEIC). In terms of domain architecture, Toprim spans 81–167 (NILCIVESPK…TFSKIAQGIP (87 aa)).

Belongs to the RecR family.

In terms of biological role, may play a role in DNA repair. It seems to be involved in an RecBC-independent recombinational process of DNA repair. It may act with RecF and RecO. The chain is Recombination protein RecR from Campylobacter jejuni (strain RM1221).